The sequence spans 471 residues: MTDLPDSTRWQLWIVAFGFFMQSLDTTIVNTALPSMAQSLGESPLHMHMVIVSYVLTVAVMLPASGWLADKVGVRNIFFTAIVLFTLGSLFCALSGTLNELLLARALQGVGGAMMVPVGRLTVMKIVPREQYMAAMTFVTLPGQIGPLLGPALGGLLVEYASWHWIFLINIPVGIIGAITTLMLMPNYTMQTRRFDLSGFLLLAVGMAVLTLALDGSKGTGFSPLAIAGLVAVGVVALVLYLLHAQNNNRALFSLKLFRTRTFSLGLAGSFAGRIGSGMLPFMTPVFLQIGFGFSPFHAGLMMIPMVLGSMGMKRIVVQVVNRFGYRRVLVATTLGLSLVTLLFMTTALLGWYYVLPFVLFLQGMVNSTRFSSMNTLTLKDLPDNLASSGNSLLSMIMQLSMSIGVTIAGLLLGLFGSQHVSVDSGTTQTVFMYTWLSMASIIALPAFIFARVPNDTHQNVAISRRKRSAQ.

Over 1 to 11 (MTDLPDSTRWQ) the chain is Periplasmic. A helical transmembrane segment spans residues 12-32 (LWIVAFGFFMQSLDTTIVNTA). Topologically, residues 33–48 (LPSMAQSLGESPLHMH) are cytoplasmic. Residues 49-69 (MVIVSYVLTVAVMLPASGWLA) form a helical membrane-spanning segment. Over 70-76 (DKVGVRN) the chain is Periplasmic. Residues 77–97 (IFFTAIVLFTLGSLFCALSGT) form a helical membrane-spanning segment. At 98–101 (LNEL) the chain is on the cytoplasmic side. The chain crosses the membrane as a helical span at residues 102-124 (LLARALQGVGGAMMVPVGRLTVM). Topologically, residues 125–137 (KIVPREQYMAAMT) are periplasmic. The chain crosses the membrane as a helical span at residues 138-158 (FVTLPGQIGPLLGPALGGLLV). Residues 159-164 (EYASWH) are Cytoplasmic-facing. A helical membrane pass occupies residues 165–185 (WIFLINIPVGIIGAITTLMLM). Over 186–196 (PNYTMQTRRFD) the chain is Periplasmic. Residues 197–217 (LSGFLLLAVGMAVLTLALDGS) traverse the membrane as a helical segment. Over 218 to 224 (KGTGFSP) the chain is Cytoplasmic. The helical transmembrane segment at 225–245 (LAIAGLVAVGVVALVLYLLHA) threads the bilayer. Over 246 to 262 (QNNNRALFSLKLFRTRT) the chain is Periplasmic. Residues 263–283 (FSLGLAGSFAGRIGSGMLPFM) traverse the membrane as a helical segment. The Cytoplasmic portion of the chain corresponds to 284–285 (TP). Residues 286–306 (VFLQIGFGFSPFHAGLMMIPM) traverse the membrane as a helical segment. At 307–341 (VLGSMGMKRIVVQVVNRFGYRRVLVATTLGLSLVT) the chain is on the periplasmic side. Residues 342–362 (LLFMTTALLGWYYVLPFVLFL) form a helical membrane-spanning segment. Residues 363–395 (QGMVNSTRFSSMNTLTLKDLPDNLASSGNSLLS) lie on the Cytoplasmic side of the membrane. Residues 396–416 (MIMQLSMSIGVTIAGLLLGLF) traverse the membrane as a helical segment. The Periplasmic portion of the chain corresponds to 417–430 (GSQHVSVDSGTTQT). The helical transmembrane segment at 431 to 451 (VFMYTWLSMASIIALPAFIFA) threads the bilayer. Residues 452–471 (RVPNDTHQNVAISRRKRSAQ) are Cytoplasmic-facing.

This sequence belongs to the major facilitator superfamily. TCR/Tet family.

The protein resides in the cell inner membrane. The protein is Putative multidrug resistance protein MdtD of Escherichia coli O6:H1 (strain CFT073 / ATCC 700928 / UPEC).